The following is a 397-amino-acid chain: Succinyl-diaminopimelate desuccinylase (397 aa).

His74 lines the Zn(2+) pocket. Asp76 is an active-site residue. Asp107 contacts Zn(2+). Glu141 serves as the catalytic Proton acceptor. The Zn(2+) site is built by Glu142, Glu170, and His368.

It belongs to the peptidase M20A family. DapE subfamily. As to quaternary structure, homodimer. Zn(2+) is required as a cofactor. It depends on Co(2+) as a cofactor.

The catalysed reaction is N-succinyl-(2S,6S)-2,6-diaminopimelate + H2O = (2S,6S)-2,6-diaminopimelate + succinate. It participates in amino-acid biosynthesis; L-lysine biosynthesis via DAP pathway; LL-2,6-diaminopimelate from (S)-tetrahydrodipicolinate (succinylase route): step 3/3. Catalyzes the hydrolysis of N-succinyl-L,L-diaminopimelic acid (SDAP), forming succinate and LL-2,6-diaminopimelate (DAP), an intermediate involved in the bacterial biosynthesis of lysine and meso-diaminopimelic acid, an essential component of bacterial cell walls. In Mesorhizobium japonicum (strain LMG 29417 / CECT 9101 / MAFF 303099) (Mesorhizobium loti (strain MAFF 303099)), this protein is Succinyl-diaminopimelate desuccinylase.